The chain runs to 103 residues: Small ribosomal subunit protein uS10 (103 aa).

Belongs to the universal ribosomal protein uS10 family. Part of the 30S ribosomal subunit.

Involved in the binding of tRNA to the ribosomes. The sequence is that of Small ribosomal subunit protein uS10 from Pseudomonas savastanoi pv. phaseolicola (strain 1448A / Race 6) (Pseudomonas syringae pv. phaseolicola (strain 1448A / Race 6)).